We begin with the raw amino-acid sequence, 368 residues long: Germination protease (368 aa).

A propeptide spanning residues 1-16 is cleaved from the precursor; sequence MKKSELDVNQYLIRTD.

Belongs to the peptidase A25 family. Homotetramer. Autoproteolytically processed. The inactive tetrameric zymogen termed p46 autoprocesses to a smaller form termed p41, which is active only during spore germination.

It carries out the reaction Endopeptidase action with P4 Glu or Asp, P1 preferably Glu &gt; Asp, P1' hydrophobic and P2' Ala.. Functionally, initiates the degradation of small, acid-soluble proteins during spore germination. This is Germination protease (gpr) from Bacillus subtilis (strain 168).